Consider the following 47-residue polypeptide: Large ribosomal subunit protein eL40 (47 aa).

The protein belongs to the eukaryotic ribosomal protein eL40 family.

This is Large ribosomal subunit protein eL40 from Methanococcus maripaludis (strain C5 / ATCC BAA-1333).